We begin with the raw amino-acid sequence, 430 residues long: Tektin-2 (430 aa).

Coiled coils occupy residues lysine 80–leucine 162 and asparagine 225–asparagine 382.

Belongs to the tektin family. Microtubule inner protein component of sperm flagellar doublet microtubules. May interact with CCDC172. In terms of processing, tyrosine phosphorylated. Ubiquitinated, leading to its degradation. Deubiquitinated by USP16, promoting its stability. As to expression, expressed at high levels in testis, trachea and fetal lung, and at lower levels in ovary, pituitary, adult lung, fetal brain and fetal kidney.

The protein resides in the cytoplasm. The protein localises to the cytoskeleton. Its subcellular location is the cilium axoneme. It localises to the flagellum axoneme. It is found in the microtubule organizing center. Microtubule inner protein (MIP) part of the dynein-decorated doublet microtubules (DMTs) in cilia and flagellar axoneme. Plays a key role in the assembly or attachment of the inner dynein arm to microtubules in sperm flagella and tracheal cilia. Forms filamentous polymers in the walls of ciliary and flagellar microtubules. In Homo sapiens (Human), this protein is Tektin-2.